Reading from the N-terminus, the 709-residue chain is Phosphate acetyltransferase (709 aa).

A phosphate acetyltransferase region spans residues 389–709 (EFCYRLKILS…TIALTSIQSL (321 aa)).

This sequence in the N-terminal section; belongs to the CobB/CobQ family. In the C-terminal section; belongs to the phosphate acetyltransferase and butyryltransferase family. Homohexamer.

It localises to the cytoplasm. It carries out the reaction acetyl-CoA + phosphate = acetyl phosphate + CoA. The protein operates within metabolic intermediate biosynthesis; acetyl-CoA biosynthesis; acetyl-CoA from acetate: step 2/2. Functionally, involved in acetate metabolism. The chain is Phosphate acetyltransferase (pta) from Buchnera aphidicola subsp. Schizaphis graminum (strain Sg).